Consider the following 563-residue polypeptide: DNA polymerase III subunit tau (563 aa).

Residue 45–52 (GPRGTGKT) participates in ATP binding. Residues Cys-64, Cys-73, Cys-76, and Cys-79 each coordinate Zn(2+).

The protein belongs to the DnaX/STICHEL family. Component of the DNA clamp loading complex consisting of tau(3):delta(1):delta'(1). The DNA polymerase III holoenzyme complex contains at least 10 different subunits organized into 3 functionally essential subassemblies: the Pol III core, the beta sliding clamp processivity factor and the clamp-loading complex. The Pol III core (subunits alpha, epsilon and theta) contains the polymerase and the 3'-5' exonuclease proofreading activities. The polymerase is tethered to the template via the dimeric beta sliding clamp processivity factor. The DNA clamp-loading complex assembles the beta sliding clamp onto the primed template and plays a central role in the organization and communication at the replication fork. Forms a complex with replicative DNA helicase DnaB (shown with G.stearothermophilus DnaB) tau(3):DnaB(6); a single ATP hydrolysis even is sufficient for complex formation. Colocalizes with DNA helicases PriA, RecQ and RecS.

The protein localises to the cytoplasm. Its subcellular location is the nucleoid. It catalyses the reaction DNA(n) + a 2'-deoxyribonucleoside 5'-triphosphate = DNA(n+1) + diphosphate. Part of the beta sliding clamp loading complex, which hydrolyzes ATP to load the beta clamp onto primed DNA to form the DNA replication pre-initiation complex. DNA polymerase III is a complex, multichain enzyme responsible for most of the replicative DNA synthesis in bacteria. In Bacillus subtilis (strain 168), this protein is DNA polymerase III subunit tau.